Here is a 249-residue protein sequence, read N- to C-terminus: Secreted flagellin C (249 aa).

The secreted form is about 1 kDa larger than the whole cell lysate form, presumably due to post-translational modification. A 22 kDa form is also found in the secreted fraction, probably resulting from proteolysis.

It is found in the secreted. The protein resides in the host cell surface. In terms of biological role, plays a role in virulence. This Campylobacter jejuni subsp. jejuni serotype O:2 (strain ATCC 700819 / NCTC 11168) protein is Secreted flagellin C (flaC).